Reading from the N-terminus, the 145-residue chain is Mannitol-specific phosphotransferase enzyme IIA component (145 aa).

The 141-residue stretch at 4–144 (PILKKENIVL…EEILSILNEV (141 aa)) folds into the PTS EIIA type-2 domain. His64 acts as the Tele-phosphohistidine intermediate in catalysis. Position 64 is a phosphohistidine; by HPr (His64).

It localises to the cytoplasm. Functionally, the phosphoenolpyruvate-dependent sugar phosphotransferase system (sugar PTS), a major carbohydrate active transport system, catalyzes the phosphorylation of incoming sugar substrates concomitantly with their translocation across the cell membrane. The enzyme II CmtAB PTS system is involved in D-mannitol transport. The chain is Mannitol-specific phosphotransferase enzyme IIA component from Geobacillus stearothermophilus (Bacillus stearothermophilus).